Consider the following 107-residue polypeptide: U1-lycotoxin-Ls1h (107 aa).

The signal sequence occupies residues 1–20 (MMKVLVVVALLVTLISYSSS). Residues 21–41 (EGIDDLEADELLSLMANEQTR) constitute a propeptide that is removed on maturation. Intrachain disulfides connect Cys-44–Cys-59, Cys-51–Cys-68, and Cys-70–Cys-84.

It belongs to the neurotoxin 19 (CSTX) family. 04 (U1-Lctx) subfamily. As to expression, expressed by the venom gland.

Its subcellular location is the secreted. This is U1-lycotoxin-Ls1h from Lycosa singoriensis (Wolf spider).